The chain runs to 359 residues: Alanine racemase, biosynthetic (359 aa).

Lysine 34 serves as the catalytic Proton acceptor; specific for D-alanine. An N6-(pyridoxal phosphate)lysine modification is found at lysine 34. Arginine 129 is a substrate binding site. The active-site Proton acceptor; specific for L-alanine is the tyrosine 255. Position 303 (methionine 303) interacts with substrate.

The protein belongs to the alanine racemase family. Requires pyridoxal 5'-phosphate as cofactor.

It catalyses the reaction L-alanine = D-alanine. It functions in the pathway amino-acid biosynthesis; D-alanine biosynthesis; D-alanine from L-alanine: step 1/1. The protein operates within cell wall biogenesis; peptidoglycan biosynthesis. Catalyzes the interconversion of L-alanine and D-alanine. Provides the D-alanine required for cell wall biosynthesis. In Escherichia coli O6:H1 (strain CFT073 / ATCC 700928 / UPEC), this protein is Alanine racemase, biosynthetic (alr).